Consider the following 185-residue polypeptide: Photosystem I assembly protein Ycf4 (185 aa).

Helical transmembrane passes span 24-44 (YIIGGMLTIGGIGFLLASISS) and 66-86 (IIMGAYGVVANLLNFYLWYMV).

This sequence belongs to the Ycf4 family.

It is found in the cellular thylakoid membrane. Functionally, seems to be required for the assembly of the photosystem I complex. In Prochlorococcus marinus (strain MIT 9312), this protein is Photosystem I assembly protein Ycf4.